The chain runs to 395 residues: S-adenosylmethionine synthase (395 aa).

His-15 lines the ATP pocket. Asp-17 is a Mg(2+) binding site. A K(+)-binding site is contributed by Glu-43. Positions 56 and 99 each coordinate L-methionine. A flexible loop region spans residues 99 to 109 (QSADIALGVDE). Residues 174–176 (DGK), 240–241 (RF), Asp-249, 255–256 (RK), Ala-272, and Lys-276 contribute to the ATP site. Asp-249 contributes to the L-methionine binding site. Lys-280 lines the L-methionine pocket.

The protein belongs to the AdoMet synthase family. In terms of assembly, homotetramer; dimer of dimers. Mg(2+) is required as a cofactor. It depends on K(+) as a cofactor.

It is found in the cytoplasm. It carries out the reaction L-methionine + ATP + H2O = S-adenosyl-L-methionine + phosphate + diphosphate. Its pathway is amino-acid biosynthesis; S-adenosyl-L-methionine biosynthesis; S-adenosyl-L-methionine from L-methionine: step 1/1. Its function is as follows. Catalyzes the formation of S-adenosylmethionine (AdoMet) from methionine and ATP. The overall synthetic reaction is composed of two sequential steps, AdoMet formation and the subsequent tripolyphosphate hydrolysis which occurs prior to release of AdoMet from the enzyme. The polypeptide is S-adenosylmethionine synthase (Alkaliphilus oremlandii (strain OhILAs) (Clostridium oremlandii (strain OhILAs))).